The chain runs to 111 residues: Large ribosomal subunit protein uL24 (111 aa).

Belongs to the universal ribosomal protein uL24 family. Part of the 50S ribosomal subunit.

Functionally, one of two assembly initiator proteins, it binds directly to the 5'-end of the 23S rRNA, where it nucleates assembly of the 50S subunit. Its function is as follows. One of the proteins that surrounds the polypeptide exit tunnel on the outside of the subunit. In Chlamydia muridarum (strain MoPn / Nigg), this protein is Large ribosomal subunit protein uL24.